Consider the following 353-residue polypeptide: Histidine biosynthesis bifunctional protein HisB (353 aa).

The segment at 1-164 (MKNKILFIDR…HITKYIIKHN (164 aa)) is histidinol-phosphatase. Residue Asp9 is the Nucleophile of the active site. The Mg(2+) site is built by Asp9 and Asp11. The Proton donor role is filled by Asp11. Positions 93, 95, 101, and 103 each coordinate Zn(2+). Asp128 contributes to the Mg(2+) binding site. The tract at residues 165-353 (RYAEIIRRTK…NMLPTSKGIL (189 aa)) is imidazoleglycerol-phosphate dehydratase.

It in the N-terminal section; belongs to the histidinol-phosphatase family. In the C-terminal section; belongs to the imidazoleglycerol-phosphate dehydratase family. Mg(2+) is required as a cofactor. Zn(2+) serves as cofactor.

Its subcellular location is the cytoplasm. It catalyses the reaction D-erythro-1-(imidazol-4-yl)glycerol 3-phosphate = 3-(imidazol-4-yl)-2-oxopropyl phosphate + H2O. The enzyme catalyses L-histidinol phosphate + H2O = L-histidinol + phosphate. It functions in the pathway amino-acid biosynthesis; L-histidine biosynthesis; L-histidine from 5-phospho-alpha-D-ribose 1-diphosphate: step 6/9. It participates in amino-acid biosynthesis; L-histidine biosynthesis; L-histidine from 5-phospho-alpha-D-ribose 1-diphosphate: step 8/9. The sequence is that of Histidine biosynthesis bifunctional protein HisB from Buchnera aphidicola subsp. Acyrthosiphon pisum (strain Tuc7).